The chain runs to 319 residues: MFRFDKEQMVIEFAGAKFGGQPGEYPTALSGTIFYARHKIVEDAKKGIFDKKAAEALINKQAEMQDITGNSAFVQVFGGTEEALVNYIDFVSEVWDGPMLLDSTSGKARMAAANRATEAGYAKQCVYNSINVAAEDEEIENLTNSDVEASIVLCFDPMDPSVGGKLNVLNDGGKTKDIGMLELAEKAGIKYPLIDVAVTPMGNGAGHAVRASFAVKAKLGLPVGSGIHNVPSAWDWLREFRKGLREEGKDQISKDVHHVCDIGANIVQTMASGDYVLYGPIDNAELAFPAVAMTDMIIAETAKEMGTATVAEHPLNKLI.

The protein belongs to the MtrH family. As to quaternary structure, the complex is composed of 8 subunits; MtrA, MtrB, MtrC, MtrD, MtrE, MtrF, MtrG and MtrH.

It carries out the reaction 5-methyl-5,6,7,8-tetrahydromethanopterin + coenzyme M + 2 Na(+)(in) = 5,6,7,8-tetrahydromethanopterin + methyl-coenzyme M + 2 Na(+)(out). It functions in the pathway one-carbon metabolism; methanogenesis from CO(2); methyl-coenzyme M from 5,10-methylene-5,6,7,8-tetrahydromethanopterin: step 2/2. Its function is as follows. Part of a complex that catalyzes the formation of methyl-coenzyme M and tetrahydromethanopterin from coenzyme M and methyl-tetrahydromethanopterin. This is an energy-conserving, sodium-ion translocating step. MtrH catalyzes the transfer of the methyl group from methyl-tetrahydromethanopterin to the corrinoid prosthetic group of MtrA. The polypeptide is Tetrahydromethanopterin S-methyltransferase subunit H (Methanococcus maripaludis (strain C5 / ATCC BAA-1333)).